The following is a 1969-amino-acid chain: Cytadherence high molecular weight protein 1 (1969 aa).

One copy of the HAT 1 repeat lies at tyrosine 148–lysine 166. The segment at lysine 174–glycine 244 is disordered. Acidic residues-rich tracts occupy residues glutamate 179–glutamate 207 and glutamine 214–glycine 242. HAT repeat units lie at residues tyrosine 258–valine 278, alanine 300–tyrosine 331, and tyrosine 333–valine 353. Residues glutamine 294 to glycine 319 are disordered. Residues valine 365 to valine 393 are disordered. Positions valine 374 to alanine 387 are enriched in acidic residues. HAT repeat units lie at residues tyrosine 477–isoleucine 497 and leucine 959–asparagine 997. Residues serine 1000–glutamate 1027 are a coiled coil. One copy of the HAT 7 repeat lies at glutamate 1029–glutamine 1067. Coiled coils occupy residues isoleucine 1082–phenylalanine 1190, serine 1547–threonine 1621, and asparagine 1758–valine 1790.

It is found in the cell projection. The protein resides in the attachment organelle membrane. Functionally, component of the cytoskeleton-like structure which stabilizes the shape of the wall-less Mycoplasma. This cytoskeleton-like network of accessory proteins containing HMW proteins 1 to 5 allows the proper anchoring of cytadhesin proteins in the mycoplasmal membrane at the attachment organelle. The sequence is that of Cytadherence high molecular weight protein 1 (hlp1) from Mycoplasmoides gallisepticum (strain R(low / passage 15 / clone 2)) (Mycoplasma gallisepticum).